The sequence spans 220 residues: Ribosomal RNA large subunit methyltransferase E (220 aa).

Residues Gly60, Trp62, Asp92, Asp108, and Asp133 each contribute to the S-adenosyl-L-methionine site. Lys173 acts as the Proton acceptor in catalysis.

The protein belongs to the class I-like SAM-binding methyltransferase superfamily. RNA methyltransferase RlmE family.

The protein localises to the cytoplasm. The enzyme catalyses uridine(2552) in 23S rRNA + S-adenosyl-L-methionine = 2'-O-methyluridine(2552) in 23S rRNA + S-adenosyl-L-homocysteine + H(+). Functionally, specifically methylates the uridine in position 2552 of 23S rRNA at the 2'-O position of the ribose in the fully assembled 50S ribosomal subunit. The protein is Ribosomal RNA large subunit methyltransferase E of Paraburkholderia phymatum (strain DSM 17167 / CIP 108236 / LMG 21445 / STM815) (Burkholderia phymatum).